Here is a 505-residue protein sequence, read N- to C-terminus: Formate--tetrahydrofolate ligase (505 aa).

This sequence belongs to the formate--tetrahydrofolate ligase family.

The catalysed reaction is (6S)-5,6,7,8-tetrahydrofolate + formate + ATP = (6R)-10-formyltetrahydrofolate + ADP + phosphate. It participates in one-carbon metabolism; tetrahydrofolate interconversion. The chain is Formate--tetrahydrofolate ligase (fhs) from Bifidobacterium longum (strain NCC 2705).